Reading from the N-terminus, the 1860-residue chain is Probable helicase with zinc finger domain (1860 aa).

A C3H1-type zinc finger spans residues 168–196 (SEEYTLCKRFLEQGLCRYGAQCTSAHSQE). 661–668 (GPYGTGKT) serves as a coordination point for ATP. The DEAA box motif lies at 787–790 (DEAA). Disordered regions lie at residues 1106 to 1136 (RSQHPPQQGPGKHQHSPPKAKGQLANHTEPF), 1158 to 1177 (TPPGAGAPASGKSPSPVQRL), 1286 to 1317 (ERKAPELKEKQGDLESVQNKSPEPQSNMGFPA), 1556 to 1604 (IQPR…PPDH), 1641 to 1709 (RQDP…RYPS), and 1749 to 1860 (MSEE…TYFK). Residues 1107–1116 (SQHPPQQGPG) show a composition bias toward low complexity. Residues 1286-1298 (ERKAPELKEKQGD) show a composition bias toward basic and acidic residues. Polar residues predominate over residues 1301-1313 (SVQNKSPEPQSNM). Residues 1641–1660 (RQDPGPLQHQQQKQQLQAPQ) show a composition bias toward low complexity. 2 stretches are compositionally biased toward pro residues: residues 1760–1769 (QPPPPPPPHP) and 1783–1794 (PLLPSKQTPPDP). Positions 1847-1860 (GSSNSSNGYYTYFK) are enriched in low complexity.

The protein belongs to the DNA2/NAM7 helicase family.

The protein localises to the nucleus. In terms of biological role, may act as a helicase. This is Probable helicase with zinc finger domain (helz) from Danio rerio (Zebrafish).